A 143-amino-acid chain; its full sequence is uncharacterized protein (143 aa).

A signal peptide spans 1–16 (MSRNRLFLVAGSLAVA). A helical membrane pass occupies residues 114 to 134 (GAYVFLGPGFTPGSPSGGSGG).

It is found in the membrane. This is an uncharacterized protein from Mycobacterium tuberculosis (strain CDC 1551 / Oshkosh).